Here is a 78-residue protein sequence, read N- to C-terminus: Protein EcdD (78 aa).

Functionally, involved in the non-oxidative decarboxylation and detoxification of phenolic derivatives under anaerobic conditions, however the precise biochemical function in metabolism of phenolic acid is unknown. The sequence is that of Protein EcdD from Escherichia coli O157:H7.